Reading from the N-terminus, the 323-residue chain is Aspartate carbamoyltransferase catalytic subunit (323 aa).

Residues Arg68 and Thr69 each coordinate carbamoyl phosphate. L-aspartate is bound at residue Lys96. Carbamoyl phosphate contacts are provided by Arg118, His148, and Gln151. L-aspartate-binding residues include Arg181 and Arg236. Carbamoyl phosphate is bound by residues Gly277 and Pro278.

The protein belongs to the aspartate/ornithine carbamoyltransferase superfamily. ATCase family. As to quaternary structure, heterododecamer (2C3:3R2) of six catalytic PyrB chains organized as two trimers (C3), and six regulatory PyrI chains organized as three dimers (R2).

The catalysed reaction is carbamoyl phosphate + L-aspartate = N-carbamoyl-L-aspartate + phosphate + H(+). The protein operates within pyrimidine metabolism; UMP biosynthesis via de novo pathway; (S)-dihydroorotate from bicarbonate: step 2/3. Functionally, catalyzes the condensation of carbamoyl phosphate and aspartate to form carbamoyl aspartate and inorganic phosphate, the committed step in the de novo pyrimidine nucleotide biosynthesis pathway. The sequence is that of Aspartate carbamoyltransferase catalytic subunit from Verminephrobacter eiseniae (strain EF01-2).